Consider the following 119-residue polypeptide: Protein Wnt-4 (119 aa).

Ser-1 carries the O-palmitoleoyl serine; by PORCN lipid modification. Intrachain disulfides connect Cys-69-Cys-100 and Cys-85-Cys-95. Residue Asn-86 is glycosylated (N-linked (GlcNAc...) asparagine).

The protein belongs to the Wnt family. Palmitoleoylation is required for efficient binding to frizzled receptors. Depalmitoleoylation leads to Wnt signaling pathway inhibition.

It localises to the secreted. The protein localises to the extracellular space. Its subcellular location is the extracellular matrix. In terms of biological role, ligand for members of the frizzled family of seven transmembrane receptors. Plays an important role in embryonic development. The polypeptide is Protein Wnt-4 (WNT4) (Meleagris gallopavo (Wild turkey)).